The chain runs to 254 residues: DNA repair protein RecO (254 aa).

The protein belongs to the RecO family.

Functionally, involved in DNA repair and RecF pathway recombination. This chain is DNA repair protein RecO, found in Anaeromyxobacter dehalogenans (strain 2CP-1 / ATCC BAA-258).